A 457-amino-acid polypeptide reads, in one-letter code: Serine--tRNA ligase (457 aa).

Position 252-254 (252-254) interacts with L-serine; sequence TAE. ATP is bound by residues 283–285 and valine 299; that span reads RKE. Glutamate 306 is a binding site for L-serine. 370–373 serves as a coordination point for ATP; sequence EMVS. Threonine 406 contacts L-serine.

Belongs to the class-II aminoacyl-tRNA synthetase family. Type-1 seryl-tRNA synthetase subfamily. As to quaternary structure, homodimer. The tRNA molecule binds across the dimer.

The protein localises to the cytoplasm. It carries out the reaction tRNA(Ser) + L-serine + ATP = L-seryl-tRNA(Ser) + AMP + diphosphate + H(+). It catalyses the reaction tRNA(Sec) + L-serine + ATP = L-seryl-tRNA(Sec) + AMP + diphosphate + H(+). Its pathway is aminoacyl-tRNA biosynthesis; selenocysteinyl-tRNA(Sec) biosynthesis; L-seryl-tRNA(Sec) from L-serine and tRNA(Sec): step 1/1. Its function is as follows. Catalyzes the attachment of serine to tRNA(Ser). Is also able to aminoacylate tRNA(Sec) with serine, to form the misacylated tRNA L-seryl-tRNA(Sec), which will be further converted into selenocysteinyl-tRNA(Sec). The chain is Serine--tRNA ligase from Saccharolobus islandicus (strain Y.G.57.14 / Yellowstone #1) (Sulfolobus islandicus).